The following is a 549-amino-acid chain: MSADITETPAWQALSDHHAEIGDRHLTELFADDPARGTELALTVGDLYIDYSKHRVTRRTLDLLVDLARAAGLEERRDAMFAGEHINTSEDRAVLHTALRLPRDAKLVVDGQDVVADVHDVLDRMGDFTDRLRSGEWTGATGERITTVVNIGIGGSDLGPVMVYDALRHYADAGISARFVSNVDPADLVAKLDGLEPAKTLFIVASKTFSTLETLTNATAARRWLTDALGDAAVAKHFVAVSTNKKLVDEFGINTDNMFGFWDWVGGRYSVDSAIGLSVMAVIGKERFAEFLAGFHIVDEHFRTAPLHQNAPALLGLIGLWYSNFFGAQSRAVLPYSNDLSRFAAYLQQLTMESNGKSVRADGTPVSTDTGEIFWGEPGTNGQHAFYQLLHQGTRLVPADFIGFSQPTDDLPTADGTGSMHDLLMSNFFAQTQVLAFGKTADAIASEGTPADVVPHKVMPGNRPTTSILATKLTPSVVGQLIALYEHQVFTEGVIWGIDSFDQWGVELGKTQAKALLPVLTGDKSPAAQSDTSTDALVRRYRTERGRPA.

E353 (proton donor) is an active-site residue. Active-site residues include H384 and K510.

The protein belongs to the GPI family.

The protein localises to the cytoplasm. The enzyme catalyses alpha-D-glucose 6-phosphate = beta-D-fructose 6-phosphate. It participates in carbohydrate biosynthesis; gluconeogenesis. Its pathway is carbohydrate degradation; glycolysis; D-glyceraldehyde 3-phosphate and glycerone phosphate from D-glucose: step 2/4. Catalyzes the reversible isomerization of glucose-6-phosphate to fructose-6-phosphate. The protein is Glucose-6-phosphate isomerase of Mycolicibacterium smegmatis (strain ATCC 700084 / mc(2)155) (Mycobacterium smegmatis).